Here is a 116-residue protein sequence, read N- to C-terminus: Toxin CSTX-10 (116 aa).

A signal peptide spans 1-20; it reads MKVLVIFAVLSLVIFSNCSA. A propeptide spanning residues 21-47 is cleaved from the precursor; it reads ETDEDFFGEESFEADDIIPFIAKEQVR. 4 cysteine pairs are disulfide-bonded: C53/C68, C60/C77, C67/C94, and C79/C92.

Expressed by the venom gland.

The protein localises to the secreted. It localises to the target cell membrane. Functionally, spider venom toxin that shows calcium channel blocking activity and exhibits cytolytic activity by affecting the outer leaflet curvature and/or pore formation across the membrane. It blocks L-type calcium channels (Cav1/CACNA1) in mammalian neurons at nanomolar concentrations. Furthermore, it produces a slow voltage-independent block of mid/low and high voltage-activated calcium channels in cockroach neurons. Potassium ions, histamine, M-ctenitoxin-Cs1a (AC P83619), CSTX-9 (AC P58604), and CSTX-13 (AC P83919) synergistically increase the insecticidal activity of this toxin. In vivo, it causes paralysis in blow flies and provokes death in drosophila. The protein is Toxin CSTX-10 of Cupiennius salei (American wandering spider).